A 301-amino-acid polypeptide reads, in one-letter code: Acetylglutamate kinase (301 aa).

Residues 68–69, Arg-90, and Asn-195 contribute to the substrate site; that span reads GG.

This sequence belongs to the acetylglutamate kinase family. ArgB subfamily.

It localises to the cytoplasm. It carries out the reaction N-acetyl-L-glutamate + ATP = N-acetyl-L-glutamyl 5-phosphate + ADP. It functions in the pathway amino-acid biosynthesis; L-arginine biosynthesis; N(2)-acetyl-L-ornithine from L-glutamate: step 2/4. Its function is as follows. Catalyzes the ATP-dependent phosphorylation of N-acetyl-L-glutamate. This chain is Acetylglutamate kinase, found in Pseudomonas fluorescens (strain SBW25).